The sequence spans 143 residues: Large ribosomal subunit protein uL15 (143 aa).

The tract at residues 1 to 47 is disordered; sequence MKLHELTPSEGSRFSRRRIGRGDSSGQGKTSGRGQKGQKARGKVRVG. The segment covering 23-35 has biased composition (gly residues); it reads DSSGQGKTSGRGQ.

This sequence belongs to the universal ribosomal protein uL15 family. Part of the 50S ribosomal subunit.

Binds to the 23S rRNA. The protein is Large ribosomal subunit protein uL15 of Lactiplantibacillus plantarum (strain ATCC BAA-793 / NCIMB 8826 / WCFS1) (Lactobacillus plantarum).